Reading from the N-terminus, the 78-residue chain is Acyl carrier protein (78 aa).

A Carrier domain is found at 2–77 (STIEERVKKI…AAIDYVNSHQ (76 aa)). Ser-37 is subject to O-(pantetheine 4'-phosphoryl)serine.

It belongs to the acyl carrier protein (ACP) family. 4'-phosphopantetheine is transferred from CoA to a specific serine of apo-ACP by AcpS. This modification is essential for activity because fatty acids are bound in thioester linkage to the sulfhydryl of the prosthetic group.

Its subcellular location is the cytoplasm. It participates in lipid metabolism; fatty acid biosynthesis. Carrier of the growing fatty acid chain in fatty acid biosynthesis. The polypeptide is Acyl carrier protein (Pseudomonas putida (strain W619)).